Consider the following 475-residue polypeptide: TOM1-like protein 1 (475 aa).

One can recognise a VHS domain in the interval 22 to 154 (ATFAGVQTED…DLLKKGVQFP (133 aa)). The interval 155-175 (PLDGEPETKQEAGQISPSRPT) is disordered. The segment covering 165-175 (EAGQISPSRPT) has biased composition (polar residues). S170 carries the phosphoserine modification. One can recognise a GAT domain in the interval 199 to 287 (EQIGKLHSEL…AILGYERFTR (89 aa)). Residues 296 to 317 (KRNPTEANQTSSEPSAPSCDLL) are disordered. Over residues 300–310 (TEANQTSSEPS) the composition is skewed to polar residues. S313 is subject to Phosphoserine. Residues 392 to 395 (YDNF) are interaction with GRB2. The short motif at 421 to 425 (LPPLP) is the SH3-binding element. The interaction with PIK3R1 stretch occupies residues 442-445 (YEVM). Phosphotyrosine is present on Y458. The SH2-binding signature appears at 458–461 (YEEI).

It belongs to the TOM1 family. In terms of assembly, interacts with the SH2 and SH3 domains of FYN when phosphorylated. Also interacts with GRB2 and PIK3R1 when phosphorylated. Interacts with LYN. Phosphorylated on tyrosines by FYN and LYN.

It localises to the golgi apparatus. It is found in the golgi stack. Its subcellular location is the endosome membrane. The protein localises to the cytoplasm. The protein resides in the membrane. In terms of biological role, probable adapter protein involved in signaling pathways. Interacts with the SH2 and SH3 domains of various signaling proteins when it is phosphorylated. May promote FYN activation, possibly by disrupting intramolecular SH3-dependent interactions. This Rattus norvegicus (Rat) protein is TOM1-like protein 1 (Tom1l1).